The sequence spans 345 residues: Protein SHI RELATED SEQUENCE 7 (345 aa).

Positions 7 to 28 (LGGRDHNKQDHHQEKDHNEDKS) are disordered. Residues 9–28 (GRDHNKQDHHQEKDHNEDKS) show a composition bias toward basic and acidic residues. C119, C122, C130, C135, C139, and C146 together coordinate Zn(2+). Positions 119–146 (CQDCGNQAKKDCPHMRCRTCCKSRGFDC) form a DNA-binding region, zn(2)-C6 fungal-type; degenerate. A disordered region spans residues 168–200 (AVLPAKRIRDANSRGGGDDDDDDKEDEKNDSCG). Residues 256 to 259 (IGGH) carry the Required for homo- and heterodimerization motif.

It belongs to the SHI protein family. As to expression, mainly expressed in the filaments of flowers, the shoot apex regions and pollen. Also present in leaves.

The protein resides in the nucleus. Transcription activator that binds DNA on 5'-ACTCTAC-3' and promotes auxin homeostasis-regulating gene expression (e.g. YUC genes), as well as genes affecting stamen development, cell expansion and timing of flowering. Synergistically with other SHI-related proteins, regulates gynoecium, stamen and leaf development in a dose-dependent manner, controlling apical-basal patterning. Promotes style and stigma formation, and influences vascular development during gynoecium development. May also have a role in the formation and/or maintenance of the shoot apical meristem (SAM). Regulates anther dehiscence and floral development. In Arabidopsis thaliana (Mouse-ear cress), this protein is Protein SHI RELATED SEQUENCE 7 (SRS7).